Consider the following 246-residue polypeptide: Protein lin-37 homolog (246 aa).

An N-acetylmethionine modification is found at Met1. Residues Lys5 and Lys7 each participate in a glycyl lysine isopeptide (Lys-Gly) (interchain with G-Cter in SUMO2) cross-link. The span at 39–55 shows a compositional bias: basic and acidic residues; the sequence is RLDEEAGKTPLDTHNKD. Disordered regions lie at residues 39 to 90 and 129 to 208; these read RLDE…GGPQ and VRER…TLIY. Phosphoserine occurs at positions 135 and 138. At Thr167 the chain carries Phosphothreonine. Ser182 and Ser202 each carry phosphoserine.

Component of the DREAM complex (also named LINC complex) at least composed of E2F4, E2F5, LIN9, LIN37, LIN52, LIN54, MYBL1, MYBL2, RBL1, RBL2, RBBP4, TFDP1 and TFDP2. The complex exists in quiescent cells where it represses cell cycle-dependent genes. It dissociates in S phase when LIN9, LIN37, LIN52 and LIN54 form a subcomplex that binds to MYBL2.

The protein is Protein lin-37 homolog (Lin37) of Mus musculus (Mouse).